A 184-amino-acid chain; its full sequence is Photosystem I assembly protein Ycf4 (184 aa).

Helical transmembrane passes span 22-42 (FCWA…GTSS) and 57-77 (IIFF…LFIS).

The protein belongs to the Ycf4 family.

The protein localises to the plastid. It is found in the chloroplast thylakoid membrane. Functionally, seems to be required for the assembly of the photosystem I complex. This is Photosystem I assembly protein Ycf4 from Crucihimalaya wallichii (Rock-cress).